Here is an 874-residue protein sequence, read N- to C-terminus: Alanine--tRNA ligase (874 aa).

Positions 562, 566, 665, and 669 each coordinate Zn(2+).

This sequence belongs to the class-II aminoacyl-tRNA synthetase family. Zn(2+) serves as cofactor.

Its subcellular location is the cytoplasm. It carries out the reaction tRNA(Ala) + L-alanine + ATP = L-alanyl-tRNA(Ala) + AMP + diphosphate. Functionally, catalyzes the attachment of alanine to tRNA(Ala) in a two-step reaction: alanine is first activated by ATP to form Ala-AMP and then transferred to the acceptor end of tRNA(Ala). Also edits incorrectly charged Ser-tRNA(Ala) and Gly-tRNA(Ala) via its editing domain. The sequence is that of Alanine--tRNA ligase from Pseudomonas syringae pv. syringae (strain B728a).